Consider the following 134-residue polypeptide: MGRDTIAEIITSIRNADMDRKRVVRIASTHITENIVKLLLREGFFENVRKHRENNKNFFVLTLRHRRNKKRPLRNILKLKRISRPGLRIYYKSQKIPRILGGMGVIIISTSRGIMTDREARLEGIGGEILFYIW.

It belongs to the universal ribosomal protein uS8 family. In terms of assembly, part of the 30S ribosomal subunit.

It localises to the plastid. Functionally, one of the primary rRNA binding proteins, it binds directly to 16S rRNA central domain where it helps coordinate assembly of the platform of the 30S subunit. This chain is Small ribosomal subunit protein uS8c (rps8), found in Cuscuta reflexa (Southern Asian dodder).